A 394-amino-acid polypeptide reads, in one-letter code: p-hydroxybenzoate hydroxylase (394 aa).

Residues S13, E32, 42 to 47 (RIRAGV), and Q102 contribute to the FAD site. Substrate contacts are provided by residues Y201, 212–214 (SQR), and Y222. D286 lines the FAD pocket. P293 is a binding site for substrate. 299-300 (LN) contributes to the FAD binding site.

The protein belongs to the aromatic-ring hydroxylase family. As to quaternary structure, homodimer. Requires FAD as cofactor.

It catalyses the reaction 4-hydroxybenzoate + NADPH + O2 + H(+) = 3,4-dihydroxybenzoate + NADP(+) + H2O. The protein operates within aromatic compound metabolism; benzoate degradation via hydroxylation; 3,4-dihydroxybenzoate from benzoate: step 2/2. Catalyzes the incorporation of an atom of dioxygen into p-hydroxybenzoate (p-OHB) to form 3,4-dihydroxybenzoate (3,4DOHB). The reaction occurs in two parts: reduction of the flavin adenine dinucleotide (FAD) in the enzyme by reduced nicotinamide adenine dinucleotide phosphate (NADPH) in response to binding p-hydroxybenzoate to the enzyme and oxidation of reduced FAD with oxygen to form a hydroperoxide, which then oxygenates p-hydroxybenzoate. The sequence is that of p-hydroxybenzoate hydroxylase (pobA) from Pseudomonas fluorescens.